We begin with the raw amino-acid sequence, 94 residues long: Viral macrophage inflammatory protein 2 (94 aa).

A signal peptide spans 1–20 (MDTKGILLVAVLTALLCLQS). 2 disulfides stabilise this stretch: C34–C58 and C35–C74.

Belongs to the intercrine beta (chemokine CC) family. Monomer. Interacts with human chemokine receptor CXCR4.

The protein localises to the secreted. Functionally, blocks infection by several different human immunodeficiency virus type 1 (HIV-1) strains. This occurs because vMIP-II binds to a wide range of chemokine receptors. May form part of the response to host defenses contributing to virus-induced neoplasia and may have relevance to KSHV and HIV-I interactions. This is Viral macrophage inflammatory protein 2 (ORF K4) from Human herpesvirus 8 type P (isolate GK18) (HHV-8).